Consider the following 237-residue polypeptide: Large ribosomal subunit protein uL1 (237 aa).

This sequence belongs to the universal ribosomal protein uL1 family. Part of the 50S ribosomal subunit.

Functionally, binds directly to 23S rRNA. The L1 stalk is quite mobile in the ribosome, and is involved in E site tRNA release. In terms of biological role, protein L1 is also a translational repressor protein, it controls the translation of the L11 operon by binding to its mRNA. The sequence is that of Large ribosomal subunit protein uL1 from Synechococcus elongatus (strain ATCC 33912 / PCC 7942 / FACHB-805) (Anacystis nidulans R2).